Reading from the N-terminus, the 379-residue chain is Cytochrome b (379 aa).

Transmembrane regions (helical) follow at residues 33–53 (FGSL…FLAM), 77–98 (WLIR…YLHI), 113–133 (WNVG…GYVL), and 178–198 (FFAF…VHLI). The heme b site is built by His83 and His97. Residues His182 and His196 each contribute to the heme b site. An a ubiquinone-binding site is contributed by His201. A run of 4 helical transmembrane segments spans residues 226–246 (YKDI…ALFS), 288–308 (LGGV…PLLH), 320–340 (FTQV…WIGG), and 347–367 (FIII…VLAP).

The protein belongs to the cytochrome b family. The cytochrome bc1 complex contains 3 respiratory subunits (MT-CYB, CYC1 and UQCRFS1), 2 core proteins (UQCRC1 and UQCRC2) and probably 6 low-molecular weight proteins. Heme b serves as cofactor.

Its subcellular location is the mitochondrion inner membrane. In terms of biological role, component of the ubiquinol-cytochrome c reductase complex (complex III or cytochrome b-c1 complex) that is part of the mitochondrial respiratory chain. The b-c1 complex mediates electron transfer from ubiquinol to cytochrome c. Contributes to the generation of a proton gradient across the mitochondrial membrane that is then used for ATP synthesis. The chain is Cytochrome b (mt-cyb) from Poeciliopsis occidentalis (Gila topminnow).